Reading from the N-terminus, the 76-residue chain is Small proline-rich protein 2F (76 aa).

3 repeat units span residues 21–29 (PKCPEPCSP), 30–38 (SVCPEPCPP), and 39–47 (PKCPEPCPE). The segment at 21 to 47 (PKCPEPCSPSVCPEPCPPPKCPEPCPE) is 3 X 9 AA approximate tandem repeats. The disordered stretch occupies residues 53–76 (SFQQKCPPVQPPPPCQQKCPPKSK).

The protein belongs to the cornifin (SPRR) family. In terms of tissue distribution, expressed in uterus.

The protein localises to the cytoplasm. Cross-linked envelope protein of keratinocytes. It is a keratinocyte protein that first appears in the cell cytosol, but ultimately becomes cross-linked to membrane proteins by transglutaminase. All that results in the formation of an insoluble envelope beneath the plasma membrane. The chain is Small proline-rich protein 2F (Sprr2f) from Mus musculus (Mouse).